The primary structure comprises 113 residues: UPF0122 protein SSU98_0878 (113 aa).

This sequence belongs to the UPF0122 family.

In terms of biological role, might take part in the signal recognition particle (SRP) pathway. This is inferred from the conservation of its genetic proximity to ftsY/ffh. May be a regulatory protein. In Streptococcus suis (strain 98HAH33), this protein is UPF0122 protein SSU98_0878.